A 795-amino-acid polypeptide reads, in one-letter code: ATP-dependent RNA helicase DHX15 (795 aa).

The disordered stretch occupies residues 1-108 (MSKRHRLDLG…HSTHAGHAGH (108 aa)). Ser15 bears the Phosphoserine mark. Over residues 20–62 (AGTDGKDRDRDRDREDRSKDRDRERDRGDREREREKEKEKELR) the composition is skewed to basic and acidic residues. Low complexity predominate over residues 79 to 108 (ASHSAHSTHSAHSAHSTHSAHSTHAGHAGH). One can recognise a Helicase ATP-binding domain in the interval 147–313 (TDILVRHQSF…FDNCPLLTIP (167 aa)). Residue 160-167 (GETGSGKT) participates in ATP binding. The short motif at 260–263 (DEAH) is the DEAH box element. Positions 338–518 (TVIQIHMCEE…SVVLQLKKLG (181 aa)) constitute a Helicase C-terminal domain. Position 488 is an N6-acetyllysine (Lys488). Residue Lys786 forms a Glycyl lysine isopeptide (Lys-Gly) (interchain with G-Cter in SUMO2) linkage.

It belongs to the DEAD box helicase family. DEAH subfamily. DDX15/PRP43 sub-subfamily. As to quaternary structure, component of the U11/U12 snRNPs that are part of the U12-type spliceosome. Identified in the Intron Large spliceosome complex (IL, also named intron lariat spliceosome), a post-mRNA release spliceosomal complex containing the excised intron, U2, U5 and U6 snRNPs, and splicing factors; the association may be transient. The IL complex exists in two distinct conformations, one with the DHX15 (ILS2) and one without (ILS1). Interacts with TFIP11 (via G-patch domain); indicative for a recruitment to the IL complex. Interacts with SSB/La. Interacts with GPATCH2 (via G-patch domain); promoting the RNA helicase activity. Interacts with NKRF (via G-patch domain); promoting the RNA helicase activity. Interacts with NLRP6.

The protein resides in the nucleus. It is found in the nucleolus. The enzyme catalyses ATP + H2O = ADP + phosphate + H(+). Its activity is regulated as follows. ATPase activity is enhanced upon binding to G-patch domain-containing proteins. G-patch domain-containing proteins act like a brace that tethers mobile sections of DHX15 together, stabilizing a functional conformation with high RNA affinity, thereby promoting the ATPase activity. In terms of biological role, RNA helicase involved in mRNA processing and antiviral innate immunity. Pre-mRNA processing factor involved in disassembly of spliceosomes after the release of mature mRNA. In cooperation with TFIP11 seem to be involved in the transition of the U2, U5 and U6 snRNP-containing IL complex to the snRNP-free IS complex leading to efficient debranching and turnover of excised introns. Plays a key role in antiviral innate immunity by promoting both MAVS-dependent signaling and NLRP6 inflammasome. Acts as an RNA virus sensor: recognizes and binds viral double stranded RNA (dsRNA) and activates the MAVS-dependent signaling to produce interferon-beta and interferon lambda-3 (IFNL3). Involved in intestinal antiviral innate immunity together with NLRP6: recognizes and binds viral dsRNA and promotes activation of the NLRP6 inflammasome in intestinal epithelial cells to restrict infection by enteric viruses. The NLRP6 inflammasome acts by promoting maturation and secretion of IL18 in the extracellular milieu. Also involved in antibacterial innate immunity by promoting Wnt-induced antimicrobial protein expression in Paneth cells. The chain is ATP-dependent RNA helicase DHX15 from Pongo abelii (Sumatran orangutan).